Consider the following 201-residue polypeptide: 3-isopropylmalate dehydratase small subunit (201 aa).

The protein belongs to the LeuD family. LeuD type 1 subfamily. Heterodimer of LeuC and LeuD.

It carries out the reaction (2R,3S)-3-isopropylmalate = (2S)-2-isopropylmalate. It functions in the pathway amino-acid biosynthesis; L-leucine biosynthesis; L-leucine from 3-methyl-2-oxobutanoate: step 2/4. Its function is as follows. Catalyzes the isomerization between 2-isopropylmalate and 3-isopropylmalate, via the formation of 2-isopropylmaleate. In Salmonella arizonae (strain ATCC BAA-731 / CDC346-86 / RSK2980), this protein is 3-isopropylmalate dehydratase small subunit.